The primary structure comprises 356 residues: (+)-(1(10)E,4E,6S,7R)-germacradien-6-ol synthase (356 aa).

Mg(2+) contacts are provided by Asp86 and Asp91. The DDXXXD motif signature appears at 86–91 (DDEYCD). Position 181 (Arg181) interacts with substrate. Residues Asn227 and Ser231 each contribute to the Mg(2+) site. Lys234 is a substrate binding site. A Mg(2+)-binding site is contributed by Glu235. A substrate-binding site is contributed by 314–315 (RY).

This sequence belongs to the terpene synthase family. Mg(2+) serves as cofactor.

It catalyses the reaction (2E,6E)-farnesyl diphosphate + H2O = (+)-(1(10)E,4E,6S,7R)-germacradien-6-ol + diphosphate. Its pathway is secondary metabolite biosynthesis; terpenoid biosynthesis. Catalyzes the conversion of (2E,6E)-farnesyl diphosphate (FPP) to yield the sesquiterpene (+)-(1(10)E,4E,6S,7R)-germacradien-6-ol via a putative 1,10-cyclization, which could require the abstraction of the pyrophosphate from FPP to yield the (E,E)-germacradienyl cation. The only accepted substrate is farnesyl diphosphate (FPP). The chain is (+)-(1(10)E,4E,6S,7R)-germacradien-6-ol synthase from Streptomyces pratensis (strain ATCC 33331 / IAF-45CD).